Reading from the N-terminus, the 377-residue chain is Succinyl-diaminopimelate desuccinylase (377 aa).

His-68 serves as a coordination point for Zn(2+). Asp-70 is a catalytic residue. A Zn(2+)-binding site is contributed by Asp-101. The active-site Proton acceptor is Glu-135. Zn(2+) is bound by residues Glu-136, Glu-164, and His-350.

The protein belongs to the peptidase M20A family. DapE subfamily. In terms of assembly, homodimer. The cofactor is Zn(2+). It depends on Co(2+) as a cofactor.

The enzyme catalyses N-succinyl-(2S,6S)-2,6-diaminopimelate + H2O = (2S,6S)-2,6-diaminopimelate + succinate. It functions in the pathway amino-acid biosynthesis; L-lysine biosynthesis via DAP pathway; LL-2,6-diaminopimelate from (S)-tetrahydrodipicolinate (succinylase route): step 3/3. In terms of biological role, catalyzes the hydrolysis of N-succinyl-L,L-diaminopimelic acid (SDAP), forming succinate and LL-2,6-diaminopimelate (DAP), an intermediate involved in the bacterial biosynthesis of lysine and meso-diaminopimelic acid, an essential component of bacterial cell walls. The protein is Succinyl-diaminopimelate desuccinylase of Aliivibrio salmonicida (strain LFI1238) (Vibrio salmonicida (strain LFI1238)).